Consider the following 578-residue polypeptide: Adhesion G protein-coupled receptor A1 (578 aa).

Topologically, residues 1-22 (MTQWDLKTVLSLPQYPGEFLHP) are extracellular. Residues 23–43 (VVYACTAVMLLCLLASVITYI) form a helical membrane-spanning segment. The Cytoplasmic portion of the chain corresponds to 44 to 56 (LHQSAIRISRKGR). A helical membrane pass occupies residues 57–77 (HALLNFCFHAALTFTVFAGGI). At 78–87 (NRTQHPILCQ) the chain is on the extracellular side. A helical membrane pass occupies residues 88–108 (AVGIALHYSTLSTMLWIGVTA). The Cytoplasmic portion of the chain corresponds to 109 to 137 (RNIYKQVTKKALPCPGADQPPYPKQPLLR). Residues 138-158 (FYLISGGVPFIICGVTAATNI) traverse the membrane as a helical segment. Residues 159–178 (RNYGTEDEDVAYCWMAWEPS) lie on the Extracellular side of the membrane. The chain crosses the membrane as a helical span at residues 179–199 (LGAFYGPAAFIALVTCVYFLC). The Cytoplasmic portion of the chain corresponds to 200 to 262 (TYVQLRRHPE…NEHSFKAQLR (63 aa)). The tract at residues 216–236 (ERTEEQQRLAVPESGHRHGVR) is disordered. The chain crosses the membrane as a helical span at residues 263–283 (AAAFTLFLFTATWTFGALAVS). The Extracellular portion of the chain corresponds to 284-289 (QGHFLD). A helical transmembrane segment spans residues 290 to 310 (MIFSCLYGAFCVTLGLFVLIH). Disordered stretches follow at residues 463–486 (PSSLDGSPHSSRSESPTSSLEGPM) and 537–578 (SLPF…ETTV). Residues 469–481 (SPHSSRSESPTSS) are compositionally biased toward low complexity. Residues 537–548 (SLPFGGPSQNGL) show a composition bias toward polar residues.

It belongs to the G-protein coupled receptor 2 family. Adhesion G-protein coupled receptor (ADGR) subfamily. Predominantly expressed in CNS.

It localises to the membrane. This Mus musculus (Mouse) protein is Adhesion G protein-coupled receptor A1.